Here is a 248-residue protein sequence, read N- to C-terminus: Phosphatidylglycerol--prolipoprotein diacylglyceryl transferase (248 aa).

Helical transmembrane passes span 6–26 (FTLFGIDIMWYGILMACGMIL), 47–67 (NIAIIAIPVGLICARIYYVVF), and 84–104 (GGGLAIHGGLIGGILAGYIYT). Residue Arg-130 participates in a 1,2-diacyl-sn-glycero-3-phospho-(1'-sn-glycerol) binding. The next 2 helical transmembrane spans lie at 186–206 (GQVIVTYITLYSIGRFFIEGL) and 218–238 (MAQVISLIGVIGGIIAHVYLS).

The protein belongs to the Lgt family.

The protein localises to the cell membrane. The catalysed reaction is L-cysteinyl-[prolipoprotein] + a 1,2-diacyl-sn-glycero-3-phospho-(1'-sn-glycerol) = an S-1,2-diacyl-sn-glyceryl-L-cysteinyl-[prolipoprotein] + sn-glycerol 1-phosphate + H(+). Its pathway is protein modification; lipoprotein biosynthesis (diacylglyceryl transfer). Functionally, catalyzes the transfer of the diacylglyceryl group from phosphatidylglycerol to the sulfhydryl group of the N-terminal cysteine of a prolipoprotein, the first step in the formation of mature lipoproteins. The polypeptide is Phosphatidylglycerol--prolipoprotein diacylglyceryl transferase (Clostridioides difficile (strain 630) (Peptoclostridium difficile)).